The sequence spans 146 residues: Hemoglobin subunit beta (146 aa).

Valine 1 carries the post-translational modification N-acetylvaline. Residues glutamine 2 to histidine 146 enclose the Globin domain. Position 44 is a phosphoserine (serine 44). Lysine 59 bears the N6-acetyllysine mark. Histidine 63 provides a ligand contact to heme b. Lysine 82 is subject to N6-acetyllysine. Histidine 92 lines the heme b pocket. An S-nitrosocysteine modification is found at cysteine 93. At lysine 144 the chain carries N6-acetyllysine.

It belongs to the globin family. In terms of assembly, heterotetramer of two alpha chains and two beta chains. As to expression, red blood cells.

Functionally, involved in oxygen transport from the lung to the various peripheral tissues. This chain is Hemoglobin subunit beta (HBB), found in Equus hemionus kulan (Turkmenian kulan).